The sequence spans 312 residues: Glyoxylate/hydroxypyruvate reductase A (312 aa).

Arg-227 is a catalytic residue. Catalysis depends on His-275, which acts as the Proton donor.

This sequence belongs to the D-isomer specific 2-hydroxyacid dehydrogenase family. GhrA subfamily.

The protein localises to the cytoplasm. The catalysed reaction is glycolate + NADP(+) = glyoxylate + NADPH + H(+). The enzyme catalyses (R)-glycerate + NAD(+) = 3-hydroxypyruvate + NADH + H(+). It carries out the reaction (R)-glycerate + NADP(+) = 3-hydroxypyruvate + NADPH + H(+). Functionally, catalyzes the NADPH-dependent reduction of glyoxylate and hydroxypyruvate into glycolate and glycerate, respectively. In Citrobacter koseri (strain ATCC BAA-895 / CDC 4225-83 / SGSC4696), this protein is Glyoxylate/hydroxypyruvate reductase A.